The sequence spans 400 residues: Nicotinate phosphoribosyltransferase (400 aa).

At H220 the chain carries Phosphohistidine; by autocatalysis.

It belongs to the NAPRTase family. In terms of processing, transiently phosphorylated on a His residue during the reaction cycle. Phosphorylation strongly increases the affinity for substrates and increases the rate of nicotinate D-ribonucleotide production. Dephosphorylation regenerates the low-affinity form of the enzyme, leading to product release.

It catalyses the reaction nicotinate + 5-phospho-alpha-D-ribose 1-diphosphate + ATP + H2O = nicotinate beta-D-ribonucleotide + ADP + phosphate + diphosphate. The protein operates within cofactor biosynthesis; NAD(+) biosynthesis; nicotinate D-ribonucleotide from nicotinate: step 1/1. Catalyzes the synthesis of beta-nicotinate D-ribonucleotide from nicotinate and 5-phospho-D-ribose 1-phosphate at the expense of ATP. The chain is Nicotinate phosphoribosyltransferase from Salmonella newport (strain SL254).